Here is a 447-residue protein sequence, read N- to C-terminus: uncharacterized protein (447 aa).

It localises to the mitochondrion. This is an uncharacterized protein from Dictyostelium discoideum (Social amoeba).